A 112-amino-acid chain; its full sequence is Integration host factor subunit alpha (112 aa).

This sequence belongs to the bacterial histone-like protein family. Heterodimer of an alpha and a beta chain.

In terms of biological role, this protein is one of the two subunits of integration host factor, a specific DNA-binding protein that functions in genetic recombination as well as in transcriptional and translational control. This chain is Integration host factor subunit alpha, found in Rhizobium etli (strain CIAT 652).